A 427-amino-acid chain; its full sequence is GTPase Obg (427 aa).

One can recognise an Obg domain in the interval 1-158 (MFVDQVKIYV…RDVTLELKVL (158 aa)). The 171-residue stretch at 159–329 (ADVGLVGFPS…LLFEVANLLE (171 aa)) folds into the OBG-type G domain. Residues 165–172 (GFPSVGKS), 190–194 (FTTIV), 212–215 (DLPG), 282–285 (NKMD), and 310–312 (SAV) each bind GTP. Mg(2+) is bound by residues S172 and T192. An OCT domain is found at 349-427 (YKFESESNFE…ILEYQFEFID (79 aa)).

The protein belongs to the TRAFAC class OBG-HflX-like GTPase superfamily. OBG GTPase family. In terms of assembly, monomer. Requires Mg(2+) as cofactor.

It is found in the cytoplasm. In terms of biological role, an essential GTPase which binds GTP, GDP and possibly (p)ppGpp with moderate affinity, with high nucleotide exchange rates and a fairly low GTP hydrolysis rate. Plays a role in control of the cell cycle, stress response, ribosome biogenesis and in those bacteria that undergo differentiation, in morphogenesis control. In Bacillus mycoides (strain KBAB4) (Bacillus weihenstephanensis), this protein is GTPase Obg.